The chain runs to 629 residues: Chaperone protein HtpG (629 aa).

Residues 1–337 (MAASKETMQF…SSDLPLNVSR (337 aa)) are a; substrate-binding. The tract at residues 338 to 554 (EILQGNRVID…ERDMALYMQQ (217 aa)) is b. A c region spans residues 555–629 (LLKQAGHEIS…INQLMLALAG (75 aa)).

The protein belongs to the heat shock protein 90 family. As to quaternary structure, homodimer.

It is found in the cytoplasm. In terms of biological role, molecular chaperone. Has ATPase activity. The chain is Chaperone protein HtpG from Acidithiobacillus ferrooxidans (strain ATCC 23270 / DSM 14882 / CIP 104768 / NCIMB 8455) (Ferrobacillus ferrooxidans (strain ATCC 23270)).